The primary structure comprises 1581 residues: Mediator of RNA polymerase II transcription subunit 1 (1581 aa).

Residues methionine 1–asparagine 670 form an interaction with the Mediator complex and THRA region. Residues methionine 16–glycine 590 form an interaction with ESR1 region. Interaction with the Mediator complex regions lie at residues phenylalanine 108 to threonine 212 and serine 215 to glycine 390. An interaction with THRA region spans residues proline 405–methionine 644. The segment at proline 542 to glutamate 788 is interaction with VDR. Serine 588 is subject to Phosphoserine. The LXXLL motif 1 motif lies at leucine 604–leucine 608. Disordered stretches follow at residues glutamine 609–glutamate 705, lysine 791–leucine 819, leucine 868–lysine 895, and glutamate 947–isoleucine 1566. Positions proline 622–valine 632 are enriched in pro residues. Residues proline 622–lysine 701 form an interaction with PPARGC1A and THRA region. Residues leucine 645–leucine 649 carry the LXXLL motif 2 motif. Polar residues predominate over residues glutamine 655 to serine 675. The segment at aspartate 656–glutamine 1065 is interaction with ESR1. Serine 664 is modified (phosphoserine). Residues cysteine 681–methionine 715 form an interaction with GATA1 region. The segment covering lysine 690–glutamate 705 has biased composition (basic and acidic residues). The residue at position 794 (serine 794) is a Phosphoserine. A Phosphothreonine modification is found at threonine 804. Residues arginine 807 to leucine 819 are compositionally biased toward polar residues. Residues glutamine 874 to alanine 901 carry the Integrase domain-binding motif (IBM) motif. A phosphoserine mark is found at serine 886 and serine 952. Residues leucine 962–glutamate 973 are compositionally biased toward basic and acidic residues. Threonine 1031 is subject to Phosphothreonine; by MAPK1 or MAPK3. Positions proline 1033–threonine 1050 are enriched in low complexity. 2 positions are modified to phosphothreonine: threonine 1050 and threonine 1056. Composition is skewed to low complexity over residues serine 1077 to serine 1093, serine 1100 to serine 1111, and serine 1119 to serine 1156. Serine 1156 carries the phosphoserine modification. Residues glycine 1162 to histidine 1195 show a composition bias toward polar residues. An N6-acetyllysine modification is found at lysine 1177. Residue serine 1207 is modified to Phosphoserine. Threonine 1215 is modified (phosphothreonine). Low complexity-rich tracts occupy residues serine 1218–serine 1227 and methionine 1234–lysine 1293. At serine 1223 the chain carries Phosphoserine. The interval leucine 1249–leucine 1421 is interaction with TP53. A Phosphoserine modification is found at serine 1302. Polar residues predominate over residues glycine 1330–asparagine 1345. At serine 1347 the chain carries Phosphoserine. Positions glutamine 1352 to lysine 1364 are enriched in basic and acidic residues. Phosphoserine is present on residues serine 1403 and serine 1433. 2 stretches are compositionally biased toward polar residues: residues methionine 1425–threonine 1440 and proline 1448–serine 1482. Position 1440 is a phosphothreonine (threonine 1440). Threonine 1457 carries the post-translational modification Phosphothreonine; by MAPK1 or MAPK3. A phosphoserine mark is found at serine 1463, serine 1465, serine 1479, serine 1481, and serine 1482. The span at lysine 1496–lysine 1505 shows a compositional bias: basic residues. A compositionally biased stretch (basic and acidic residues) spans lysine 1506 to lysine 1522. At lysine 1529 the chain carries N6-acetyllysine. Polar residues predominate over residues tryptophan 1533–leucine 1552.

Belongs to the Mediator complex subunit 1 family. In terms of assembly, component of the Mediator complex, which is composed of MED1, MED4, MED6, MED7, MED8, MED9, MED10, MED11, MED12, MED13, MED13L, MED14, MED15, MED16, MED17, MED18, MED19, MED20, MED21, MED22, MED23, MED24, MED25, MED26, MED27, MED29, MED30, MED31, CCNC, CDK8 and CDC2L6/CDK11. The MED12, MED13, CCNC and CDK8 subunits form a distinct module termed the CDK8 module. Mediator containing the CDK8 module is less active than Mediator lacking this module in supporting transcriptional activation. Individual preparations of the Mediator complex lacking one or more distinct subunits have been variously termed ARC, CRSP, DRIP, PC2, SMCC and TRAP. This subunit specifically interacts with a number of nuclear receptors in a ligand-dependent fashion including AR, ESR1, ESR2, PPARA, PPARG, RORA, RXRA, RXRG, THRA, THRB and VDR. Interacts with CTNNB1, GABPA, GLI3, PPARGC1A and TP53. Interacts with GATA1 and YWHAH. Interacts with CLOCK; this interaction requires the presence of THRAP3. Interacts with CCAR1. Interacts with NR4A3. Interacts (via IBM motif) with PSIP1 (via IBD domain); phosphorylation increases its affinity for PSIP1. Interacts with USP22. Post-translationally, phosphorylated by MAPK1 or MAPK3 during G2/M phase which may enhance protein stability and promote entry into the nucleolus. Phosphorylation increases its interaction with PSIP1.

It is found in the nucleus. Its function is as follows. Component of the Mediator complex, a coactivator involved in the regulated transcription of nearly all RNA polymerase II-dependent genes. Mediator functions as a bridge to convey information from gene-specific regulatory proteins to the basal RNA polymerase II transcription machinery. Mediator is recruited to promoters by direct interactions with regulatory proteins and serves as a scaffold for the assembly of a functional preinitiation complex with RNA polymerase II and the general transcription factors. Acts as a coactivator for GATA1-mediated transcriptional activation during erythroid differentiation of K562 erythroleukemia cells. In Pongo abelii (Sumatran orangutan), this protein is Mediator of RNA polymerase II transcription subunit 1 (MED1).